A 158-amino-acid polypeptide reads, in one-letter code: SsrA-binding protein (158 aa).

Belongs to the SmpB family.

It is found in the cytoplasm. Required for rescue of stalled ribosomes mediated by trans-translation. Binds to transfer-messenger RNA (tmRNA), required for stable association of tmRNA with ribosomes. tmRNA and SmpB together mimic tRNA shape, replacing the anticodon stem-loop with SmpB. tmRNA is encoded by the ssrA gene; the 2 termini fold to resemble tRNA(Ala) and it encodes a 'tag peptide', a short internal open reading frame. During trans-translation Ala-aminoacylated tmRNA acts like a tRNA, entering the A-site of stalled ribosomes, displacing the stalled mRNA. The ribosome then switches to translate the ORF on the tmRNA; the nascent peptide is terminated with the 'tag peptide' encoded by the tmRNA and targeted for degradation. The ribosome is freed to recommence translation, which seems to be the essential function of trans-translation. In Bartonella quintana (strain Toulouse) (Rochalimaea quintana), this protein is SsrA-binding protein.